Reading from the N-terminus, the 158-residue chain is Large ribosomal subunit protein uL16 (158 aa).

It belongs to the universal ribosomal protein uL16 family. As to quaternary structure, part of the 50S ribosomal subunit.

Functionally, binds 23S rRNA and is also seen to make contacts with the A and possibly P site tRNAs. The sequence is that of Large ribosomal subunit protein uL16 from Prochlorococcus marinus (strain MIT 9313).